Reading from the N-terminus, the 861-residue chain is Extra-large guanine nucleotide-binding protein 2 (861 aa).

Disordered stretches follow at residues 1–32 and 121–168; these read MAAV…TSSG and VSGS…DDRV. The span at 131–143 shows a compositional bias: basic and acidic residues; it reads KRLDVPEEVKSPA. A compositionally biased stretch (low complexity) spans 146-156; it reads RLSPSSPLSAS. Basic and acidic residues predominate over residues 157–168; sequence AREEDHLDDDRV. The Nuclear localization signal signature appears at 204–211; the sequence is RAERKGKR. The RING-type; degenerate zinc-finger motif lies at 214 to 257; it reads CYRCQLGNRFTEKEVCIVCDAKYCFNCVRRAMGAMPEGRKCQAC. The G-alpha domain occupies 461–853; the sequence is MLNKLLLIGS…TSMFQEMSTT (393 aa). A G1 motif region spans residues 464-477; it reads KLLLIGSEKGGATT. Residue 469–477 participates in GTP binding; the sequence is GSEKGGATT. Thr476 contacts Ca(2+). The interval 523–545 is disordered; that stretch reads EMSNDQSSGNVGDETSAKPGNSI. Position 624–632 (624–632) interacts with GTP; it reads DILQAEGLS. Residues 624-632 form a G2 motif region; the sequence is DILQAEGLS. Ser632 contributes to the Ca(2+) binding site. Residues 665–674 are G3 motif; it reads YQLIRLNPRS. A G4 motif region spans residues 737 to 744; the sequence is LLVLTKFD. Position 741 to 744 (741 to 744) interacts with GTP; that stretch reads TKFD. The interval 818 to 823 is G5 motif; the sequence is QVSLES.

The protein belongs to the G-alpha family. XLG subfamily. Interacts with GB1. Component of a G-protein complex at least composed of XLG2 and GB1. Interacts with RTV1. Requires Ca(2+) as cofactor. In terms of tissue distribution, ubiquitous. Strongly expressed in vascular tissues, root and shoot meristems and lateral root primordia.

Its subcellular location is the nucleus. Guanine nucleotide-binding proteins (G proteins) are involved as modulators or transducers in various transmembrane signaling systems. Binds GTP with specificity. Plays a role in the root morphogenesis by regulation of the cell proliferation. Acts as a positive regulator in resistance to pathogen that triggers the salicylic acid (SA) pathway. Promotes the DNA binding activity of RTV1 specifically to promoter regions of FT and SOC1 in vivo leading to the activation of floral integrator genes. This chain is Extra-large guanine nucleotide-binding protein 2 (XLG2), found in Arabidopsis thaliana (Mouse-ear cress).